A 919-amino-acid polypeptide reads, in one-letter code: Transcriptional regulatory protein EDS1 (919 aa).

The interval 1 to 54 is disordered; that stretch reads MSHHVPNLYGTPIRDPHERKRNSASMGEVNQSVSSRNCERGSEKGTKQRKKASH. A compositionally biased stretch (polar residues) spans 23–36; sequence SASMGEVNQSVSSR. The segment covering 37-46 has biased composition (basic and acidic residues); that stretch reads NCERGSEKGT. The zn(2)-C6 fungal-type DNA-binding region spans 56 to 85; that stretch reads CDQCRRKRIKCRFDKHTGVCQGCLEVGEKC. The segment at 297-338 is disordered; sequence AGFPNKKLGTDGRSDKWDKNSTWKPVYRSSNPSHPSTEKNVS. A compositionally biased stretch (basic and acidic residues) spans 304 to 317; sequence LGTDGRSDKWDKNS. The segment covering 318-338 has biased composition (polar residues); the sequence is TWKPVYRSSNPSHPSTEKNVS.

This sequence belongs to the EDS1/RGT1 family. In terms of assembly, binds DNA in a sequence-specific manner.

It localises to the nucleus. The protein is Transcriptional regulatory protein EDS1 (EDS1) of Saccharomyces cerevisiae (strain ATCC 204508 / S288c) (Baker's yeast).